The sequence spans 475 residues: C3a anaphylatoxin chemotactic receptor (475 aa).

Topologically, residues 1–23 (MESSSAETNSTGLHLEPQYQPET) are extracellular. Asn-9 is a glycosylation site (N-linked (GlcNAc...) asparagine). Residues 24–46 (ILAMAILGLTFVLGLPGNGLVLW) traverse the membrane as a helical segment. Over 47-57 (VAGLKMRRTVN) the chain is Cytoplasmic. A helical membrane pass occupies residues 58–80 (TVWFLHLTVADFVCCLSLPFSMA). Residues 81-96 (HLALRGYWPYGEILCK) lie on the Extracellular side of the membrane. The cysteines at positions 95 and 172 are disulfide-linked. The chain crosses the membrane as a helical span at residues 97-118 (FIPTVIIFNMFASVFLLTAISL). The Cytoplasmic segment spans residues 119–139 (DRCLMVLKPIWCQNHRNVRTA). The chain crosses the membrane as a helical span at residues 140–160 (CIICGCIWLVAFVLCIPVFVY). Residues 161-331 (RETFTLENHT…RLLKVITFTR (171 aa)) are Extracellular-facing. Asn-168 is a glycosylation site (N-linked (GlcNAc...) asparagine). Residues Tyr-174 and Tyr-183 each carry the sulfotyrosine modification. N-linked (GlcNAc...) asparagine glycosylation is found at Asn-273 and Asn-292. The helical transmembrane segment at 332-351 (LVVGFLLPMIIMVACYTLII) threads the bilayer. The Cytoplasmic segment spans residues 352 to 368 (FRMRRVRVVKSWNKALH). Residues 369–391 (LAMVVVTIFLICWAPYHVFGVLI) traverse the membrane as a helical segment. The Extracellular portion of the chain corresponds to 392 to 408 (LFINPESRVGAALLSWD). The chain crosses the membrane as a helical span at residues 409-429 (HVSIALASANSCFNPFLYALL). Residues 430-475 (GRDLRKRVRQSMKGILEAAFSEDISKSTSFIQAKAFSEKHSLSTNV) are Cytoplasmic-facing. Ser-450 is subject to Phosphoserine.

This sequence belongs to the G-protein coupled receptor 1 family. Interacts with VGF-derived peptide TLQP-21. Expressed in the heart, kidney, lung, liver, peritoneal macrophages and spleen.

The protein localises to the cell membrane. Receptor for the chemotactic and inflammatory peptide anaphylatoxin C3a. This receptor stimulates chemotaxis, granule enzyme release and superoxide anion production. This Cavia porcellus (Guinea pig) protein is C3a anaphylatoxin chemotactic receptor (C3AR1).